The primary structure comprises 864 residues: Probable LRR receptor-like serine/threonine-protein kinase At1g07550 (864 aa).

A signal peptide spans M1–S23. Residues Q24–A507 are Extracellular-facing. N49, N229, N256, N289, N432, N445, and N464 each carry an N-linked (GlcNAc...) asparagine glycan. LRR repeat units lie at residues R411 to T434, Q435 to M457, and Y459 to D480. The chain crosses the membrane as a helical span at residues V508–L528. At R529–R864 the chain is on the cytoplasmic side. At T551 the chain carries Phosphothreonine. The Protein kinase domain occupies N560–L831. ATP-binding positions include I566–V574 and K587. Residue Y632 is modified to Phosphotyrosine. The active-site Proton acceptor is D684. A phosphothreonine mark is found at T718 and T723. At Y731 the chain carries Phosphotyrosine.

This sequence belongs to the protein kinase superfamily. Ser/Thr protein kinase family.

It localises to the membrane. It catalyses the reaction L-seryl-[protein] + ATP = O-phospho-L-seryl-[protein] + ADP + H(+). The catalysed reaction is L-threonyl-[protein] + ATP = O-phospho-L-threonyl-[protein] + ADP + H(+). In Arabidopsis thaliana (Mouse-ear cress), this protein is Probable LRR receptor-like serine/threonine-protein kinase At1g07550.